Reading from the N-terminus, the 659-residue chain is Pentatricopeptide repeat-containing protein At3g48810 (659 aa).

PPR repeat units follow at residues 75 to 109 (TPLT…GFHC), 110 to 144 (SEDL…GCDP), 145 to 179 (SVKI…GFEP), 180 to 214 (NVFT…GCCP), 215 to 243 (DAVS…ERFE), 245 to 279 (VVSV…GISP), 280 to 314 (NVIS…GCHP), 315 to 350 (NIYT…GLQP), 351 to 385 (NVVA…GCSP), 386 to 420 (NIRT…GCCP), 421 to 455 (NVVV…NCAP), 456 to 490 (SVPT…HRCP), 492 to 526 (NIVT…GVEW), 527 to 561 (SSST…GKSP), 562 to 598 (DEIT…KWRP), and 599 to 633 (DVIS…GIVP).

It belongs to the PPR family. P subfamily.

In Arabidopsis thaliana (Mouse-ear cress), this protein is Pentatricopeptide repeat-containing protein At3g48810.